The chain runs to 234 residues: Ubiquitin thioesterase OTUB2 (234 aa).

An OTU domain is found at 40–231; sequence TSIRKTKGDG…TSHYNILYAA (192 aa). Aspartate 48 is a catalytic residue. Residue cysteine 51 is the Nucleophile of the active site. Active-site residues include histidine 205 and histidine 224.

This sequence belongs to the peptidase C65 family.

It catalyses the reaction Thiol-dependent hydrolysis of ester, thioester, amide, peptide and isopeptide bonds formed by the C-terminal Gly of ubiquitin (a 76-residue protein attached to proteins as an intracellular targeting signal).. Hydrolase that can remove conjugated ubiquitin from proteins in vitro and may therefore play an important regulatory role at the level of protein turnover by preventing degradation. Mediates deubiquitination of 'Lys-11'-,'Lys-48'- and 'Lys-63'-linked polyubiquitin chains, with a preference for 'Lys-63'-linked polyubiquitin chains. The protein is Ubiquitin thioesterase OTUB2 (Otub2) of Mus musculus (Mouse).